The sequence spans 357 residues: Red-sensitive opsin (357 aa).

Residues 1 to 49 (MGDQWGDAVFAARRRGDDTTREAAFTYTNSNNTKDPFEGPNYHIAPRWV) lie on the Extracellular side of the membrane. An N-linked (GlcNAc...) asparagine glycan is attached at Asn-31. The helical transmembrane segment at 50 to 74 (YNLATCWMFFVVVASTVTNGLVLVA) threads the bilayer. At 75–86 (SAKFKKLRHPLN) the chain is on the cytoplasmic side. The chain crosses the membrane as a helical span at residues 87–112 (WILVNLAIADLLETLLASTISVCNQF). The Extracellular segment spans residues 113–126 (FGYFILGHPMCVFE). A disulfide bridge connects residues Cys-123 and Cys-200. A helical membrane pass occupies residues 127 to 146 (GFTVATCGIAGLWSLTVISW). At 147–165 (ERWVVVCKPFGNVKFDGKM) the chain is on the cytoplasmic side. Residues 166-189 (ATAGIVFTWVWSAVWCAPPIFGWS) traverse the membrane as a helical segment. Residues 190–215 (RYWPHGLKTSCGPDVFSGSEDPGVQS) are Extracellular-facing. Residues 216 to 243 (YMIVLMITCCFIPLGIIILCYIAVWWAI) form a helical membrane-spanning segment. The Cytoplasmic portion of the chain corresponds to 244–265 (RTVAQQQKDSESTQKAEKEVSR). The chain crosses the membrane as a helical span at residues 266–289 (MVVVMIMAYCFCWGPYTFFACFAA). Topologically, residues 290 to 297 (ANPGYAFH) are extracellular. A helical membrane pass occupies residues 298–322 (PLAAAMPAYFAKSATIYNPVIYVFM). N6-(retinylidene)lysine is present on Lys-309. The Cytoplasmic portion of the chain corresponds to 323-357 (NRQFRVCIMQLFGKKVDDGSEVSTSKTEVSSVAPA).

Belongs to the G-protein coupled receptor 1 family. Opsin subfamily. In terms of processing, phosphorylated on some or all of the serine and threonine residues present in the C-terminal region. As to expression, the color pigments are found in the cone photoreceptor cells.

The protein localises to the membrane. In terms of biological role, visual pigments are the light-absorbing molecules that mediate vision. They consist of an apoprotein, opsin, covalently linked to cis-retinal. The protein is Red-sensitive opsin (R007) of Psalidodon fasciatus (Banded astyanax).